Consider the following 440-residue polypeptide: Trigger factor (440 aa).

Residues 163–248 enclose the PPIase FKBP-type domain; that stretch reads GDGVTVDFEG…VKKIESAHLP (86 aa).

Belongs to the FKBP-type PPIase family. Tig subfamily.

It is found in the cytoplasm. The catalysed reaction is [protein]-peptidylproline (omega=180) = [protein]-peptidylproline (omega=0). Involved in protein export. Acts as a chaperone by maintaining the newly synthesized protein in an open conformation. Functions as a peptidyl-prolyl cis-trans isomerase. The polypeptide is Trigger factor (Verminephrobacter eiseniae (strain EF01-2)).